Reading from the N-terminus, the 134-residue chain is Large ribosomal subunit protein bL19 (134 aa).

The disordered stretch occupies residues 110–134 (ARLHQEEGPSSAAPASTPPAAAPQA). Residues 125–134 (STPPAAAPQA) are compositionally biased toward pro residues.

The protein belongs to the bacterial ribosomal protein bL19 family.

Functionally, this protein is located at the 30S-50S ribosomal subunit interface and may play a role in the structure and function of the aminoacyl-tRNA binding site. The sequence is that of Large ribosomal subunit protein bL19 from Anaeromyxobacter sp. (strain Fw109-5).